A 385-amino-acid polypeptide reads, in one-letter code: 1-deoxy-D-xylulose 5-phosphate reductoisomerase (385 aa).

Threonine 10, glycine 11, serine 12, isoleucine 13, and asparagine 124 together coordinate NADPH. Residue lysine 125 coordinates 1-deoxy-D-xylulose 5-phosphate. Glutamate 126 contributes to the NADPH binding site. Mn(2+) is bound at residue aspartate 150. Positions 151, 152, 176, and 199 each coordinate 1-deoxy-D-xylulose 5-phosphate. Glutamate 152 is a Mn(2+) binding site. Residue glycine 205 participates in NADPH binding. Positions 212, 217, 218, and 221 each coordinate 1-deoxy-D-xylulose 5-phosphate. Glutamate 221 is a Mn(2+) binding site.

The protein belongs to the DXR family. Requires Mg(2+) as cofactor. The cofactor is Mn(2+).

The catalysed reaction is 2-C-methyl-D-erythritol 4-phosphate + NADP(+) = 1-deoxy-D-xylulose 5-phosphate + NADPH + H(+). The protein operates within isoprenoid biosynthesis; isopentenyl diphosphate biosynthesis via DXP pathway; isopentenyl diphosphate from 1-deoxy-D-xylulose 5-phosphate: step 1/6. In terms of biological role, catalyzes the NADPH-dependent rearrangement and reduction of 1-deoxy-D-xylulose-5-phosphate (DXP) to 2-C-methyl-D-erythritol 4-phosphate (MEP). This is 1-deoxy-D-xylulose 5-phosphate reductoisomerase from Clostridium botulinum (strain Alaska E43 / Type E3).